A 67-amino-acid polypeptide reads, in one-letter code: UPF0434 protein RALTA_A0561 (67 aa).

The protein belongs to the UPF0434 family.

The chain is UPF0434 protein RALTA_A0561 from Cupriavidus taiwanensis (strain DSM 17343 / BCRC 17206 / CCUG 44338 / CIP 107171 / LMG 19424 / R1) (Ralstonia taiwanensis (strain LMG 19424)).